A 127-amino-acid polypeptide reads, in one-letter code: Large ribosomal subunit protein bL20 (127 aa).

This sequence belongs to the bacterial ribosomal protein bL20 family.

In terms of biological role, binds directly to 23S ribosomal RNA and is necessary for the in vitro assembly process of the 50S ribosomal subunit. It is not involved in the protein synthesizing functions of that subunit. This chain is Large ribosomal subunit protein bL20, found in Corynebacterium diphtheriae (strain ATCC 700971 / NCTC 13129 / Biotype gravis).